The chain runs to 350 residues: Dihydroorotase (350 aa).

Zn(2+) contacts are provided by His13 and His15. Residues His15–Arg17 and Asn41 each bind substrate. Zn(2+) is bound by residues Lys99, His136, and His174. Lys99 is subject to N6-carboxylysine. Residue His136 coordinates substrate. Leu219 lines the substrate pocket. A Zn(2+)-binding site is contributed by Asp247. Asp247 is an active-site residue. Residues His251 and Ala263 each contribute to the substrate site.

The protein belongs to the metallo-dependent hydrolases superfamily. DHOase family. Class II DHOase subfamily. Homodimer. Zn(2+) is required as a cofactor.

The enzyme catalyses (S)-dihydroorotate + H2O = N-carbamoyl-L-aspartate + H(+). It functions in the pathway pyrimidine metabolism; UMP biosynthesis via de novo pathway; (S)-dihydroorotate from bicarbonate: step 3/3. Functionally, catalyzes the reversible cyclization of carbamoyl aspartate to dihydroorotate. In Allorhizobium ampelinum (strain ATCC BAA-846 / DSM 112012 / S4) (Agrobacterium vitis (strain S4)), this protein is Dihydroorotase.